The chain runs to 294 residues: Pyridoxal 5'-phosphate synthase subunit PdxS (294 aa).

Asp24 contributes to the D-ribose 5-phosphate binding site. Lys81 functions as the Schiff-base intermediate with D-ribose 5-phosphate in the catalytic mechanism. Gly153 provides a ligand contact to D-ribose 5-phosphate. Arg165 contacts D-glyceraldehyde 3-phosphate. Residues Gly214 and 235–236 each bind D-ribose 5-phosphate; that span reads GS.

Belongs to the PdxS/SNZ family. In the presence of PdxT, forms a dodecamer of heterodimers.

It carries out the reaction aldehydo-D-ribose 5-phosphate + D-glyceraldehyde 3-phosphate + L-glutamine = pyridoxal 5'-phosphate + L-glutamate + phosphate + 3 H2O + H(+). The protein operates within cofactor biosynthesis; pyridoxal 5'-phosphate biosynthesis. In terms of biological role, catalyzes the formation of pyridoxal 5'-phosphate from ribose 5-phosphate (RBP), glyceraldehyde 3-phosphate (G3P) and ammonia. The ammonia is provided by the PdxT subunit. Can also use ribulose 5-phosphate and dihydroxyacetone phosphate as substrates, resulting from enzyme-catalyzed isomerization of RBP and G3P, respectively. In Bacillus licheniformis (strain ATCC 14580 / DSM 13 / JCM 2505 / CCUG 7422 / NBRC 12200 / NCIMB 9375 / NCTC 10341 / NRRL NRS-1264 / Gibson 46), this protein is Pyridoxal 5'-phosphate synthase subunit PdxS.